The sequence spans 343 residues: GTPase Obg (343 aa).

The Obg domain occupies 1–159 (MKFLDQAKVY…LNIWLRLKLI (159 aa)). Residues 160–327 (ADAGLVGLPN…VLRALMTVIA (168 aa)) enclose the OBG-type G domain. GTP is bound by residues 166–173 (GLPNAGKS), 191–195 (FTTLH), 212–215 (DIPG), 279–282 (SQVD), and 308–310 (SAV). The Mg(2+) site is built by Ser-173 and Thr-193.

This sequence belongs to the TRAFAC class OBG-HflX-like GTPase superfamily. OBG GTPase family. In terms of assembly, monomer. Mg(2+) is required as a cofactor.

It localises to the cytoplasm. In terms of biological role, an essential GTPase which binds GTP, GDP and possibly (p)ppGpp with moderate affinity, with high nucleotide exchange rates and a fairly low GTP hydrolysis rate. Plays a role in control of the cell cycle, stress response, ribosome biogenesis and in those bacteria that undergo differentiation, in morphogenesis control. The sequence is that of GTPase Obg from Mesorhizobium japonicum (strain LMG 29417 / CECT 9101 / MAFF 303099) (Mesorhizobium loti (strain MAFF 303099)).